Reading from the N-terminus, the 305-residue chain is GMP synthase [glutamine-hydrolyzing] subunit B (305 aa).

Residues 2 to 184 (VNTERFIQQA…LGLPREIQHR (183 aa)) form the GMPS ATP-PPase domain. 29-35 (SGGVDSS) lines the ATP pocket.

In terms of assembly, heterodimer composed of a glutamine amidotransferase subunit (A) and a GMP-binding subunit (B).

It carries out the reaction XMP + L-glutamine + ATP + H2O = GMP + L-glutamate + AMP + diphosphate + 2 H(+). The protein operates within purine metabolism; GMP biosynthesis; GMP from XMP (L-Gln route): step 1/1. In terms of biological role, catalyzes the synthesis of GMP from XMP. This is GMP synthase [glutamine-hydrolyzing] subunit B from Methanosphaerula palustris (strain ATCC BAA-1556 / DSM 19958 / E1-9c).